A 248-amino-acid polypeptide reads, in one-letter code: Ras-related protein Rab-28 (248 aa).

The disordered stretch occupies residues 1–30 (MTTMGEDEAPALPKKSPLPEKIDEADVDDD). 42 to 50 (GDGASGKTS) provides a ligand contact to GTP. Residues 64–72 (YHQTLGLDF) carry the Effector region motif. GTP-binding positions include 91 to 95 (DIGGQ), 152 to 155 (NKTD), and 182 to 184 (SAK). The interval 227–248 (QSDASYARRSDQSRSTSVCSIT) is disordered. Positions 239-248 (SRSTSVCSIT) are enriched in polar residues.

This sequence belongs to the small GTPase superfamily. Rab family. In terms of tissue distribution, expressed in amphid and phasmid ciliated sensory neurons.

It is found in the cell projection. The protein resides in the cilium membrane. The protein localises to the perikaryon. It localises to the cytoplasm. Its subcellular location is the cytoskeleton. It is found in the cilium axoneme. GTPase. Intraflagellar transport (IFT) cargo that undergoes bidirectional IFT along the ciliary axoneme when in active GTP-bound state in amphid and phasmid ciliated sensory neurons. Targeting and function as IFT cargo may depend on the BBSome, an IFT cargo adapter. Does not undergo IFT when in inactive GDP-bound state. May in turn play a role in cilium structure and/or function in ciliated sensory neurons. The protein is Ras-related protein Rab-28 of Caenorhabditis elegans.